Consider the following 185-residue polypeptide: Photosystem I assembly protein Ycf4 (185 aa).

Helical transmembrane passes span Asn-21–Tyr-43 and Gly-63–Leu-85.

The protein belongs to the Ycf4 family.

It localises to the plastid. The protein localises to the chloroplast thylakoid membrane. Functionally, seems to be required for the assembly of the photosystem I complex. This chain is Photosystem I assembly protein Ycf4, found in Saccharum hybrid (Sugarcane).